Reading from the N-terminus, the 184-residue chain is Ribosome-recycling factor (184 aa).

This sequence belongs to the RRF family.

Its subcellular location is the cytoplasm. Responsible for the release of ribosomes from messenger RNA at the termination of protein biosynthesis. May increase the efficiency of translation by recycling ribosomes from one round of translation to another. In Natranaerobius thermophilus (strain ATCC BAA-1301 / DSM 18059 / JW/NM-WN-LF), this protein is Ribosome-recycling factor.